The sequence spans 128 residues: Large ribosomal subunit protein bL17 (128 aa).

Belongs to the bacterial ribosomal protein bL17 family. As to quaternary structure, part of the 50S ribosomal subunit. Contacts protein L32.

In Streptococcus equi subsp. equi (strain 4047), this protein is Large ribosomal subunit protein bL17.